The primary structure comprises 270 residues: Tubulin-specific chaperone B (270 aa).

Positions 214–256 (GTVEFSSGVWIGVELDLPLGKNDGSVKGKQYFQCSPKYGCFAK) constitute a CAP-Gly domain.

The protein belongs to the TBCB family. Supercomplex made of cofactors A to E. Cofactors A and D function by capturing and stabilizing tubulin in a quasi-native conformation. Cofactor E binds to the cofactor D-tubulin complex; interaction with cofactor C then causes the release of tubulin polypeptides that are committed to the native state.

It localises to the cytoplasm. The protein resides in the cytoskeleton. Its function is as follows. Binds to alpha-tubulin folding intermediates after their interaction with cytosolic chaperonin in the pathway leading from newly synthesized tubulin to properly folded heterodimer. This is Tubulin-specific chaperone B (tbcb) from Dictyostelium discoideum (Social amoeba).